Here is a 475-residue protein sequence, read N- to C-terminus: Ras-GEF domain-containing family member 1B-B (475 aa).

Polar residues predominate over residues 1–19 (MPQTTPYSSKFNPSAYSSS). Residues 1–25 (MPQTTPYSSKFNPSAYSSSHSHRQP) are disordered. An N-terminal Ras-GEF domain is found at 36-166 (RDNKLVSGSL…LIQRLLRKLT (131 aa)). The region spanning 209–456 (DPFIFAQQLT…QLASYESEGP (248 aa)) is the Ras-GEF domain. The interval 452-475 (ESEGPENNLERDTRRSLRSSLSRM) is disordered.

In terms of biological role, guanine nucleotide exchange factor (GEF) for Ras family proteins. The polypeptide is Ras-GEF domain-containing family member 1B-B (Danio rerio (Zebrafish)).